We begin with the raw amino-acid sequence, 397 residues long: Adenylosuccinate synthetase (397 aa).

GTP contacts are provided by residues 11–17 (GDEGKGK) and 39–41 (GHT). Asp12 serves as the catalytic Proton acceptor. Mg(2+) is bound by residues Asp12 and Gly39. IMP is bound by residues 12–15 (DEGK), 37–40 (NAGH), Thr125, Arg139, Gln212, Thr227, and Arg290. The active-site Proton donor is the His40. 286-292 (STTGRPR) is a substrate binding site. GTP contacts are provided by residues Arg292, 318-320 (KAD), and 386-388 (STG).

This sequence belongs to the adenylosuccinate synthetase family. Homodimer. Mg(2+) serves as cofactor.

It is found in the cytoplasm. It carries out the reaction IMP + L-aspartate + GTP = N(6)-(1,2-dicarboxyethyl)-AMP + GDP + phosphate + 2 H(+). Its pathway is purine metabolism; AMP biosynthesis via de novo pathway; AMP from IMP: step 1/2. Its function is as follows. Plays an important role in the de novo pathway of purine nucleotide biosynthesis. Catalyzes the first committed step in the biosynthesis of AMP from IMP. This chain is Adenylosuccinate synthetase, found in Thermotoga maritima (strain ATCC 43589 / DSM 3109 / JCM 10099 / NBRC 100826 / MSB8).